A 506-amino-acid chain; its full sequence is Probable Xaa-Pro aminopeptidase BDBG_08406 (506 aa).

Residues Asp-285, Asp-296, Glu-433, and Glu-471 each contribute to the Mn(2+) site.

It belongs to the peptidase M24B family. Mn(2+) is required as a cofactor.

The enzyme catalyses Release of any N-terminal amino acid, including proline, that is linked to proline, even from a dipeptide or tripeptide.. Functionally, catalyzes the removal of a penultimate prolyl residue from the N-termini of peptides. This Blastomyces gilchristii (strain SLH14081) (Blastomyces dermatitidis) protein is Probable Xaa-Pro aminopeptidase BDBG_08406.